The following is a 713-amino-acid chain: Low-density lipoprotein receptor-related protein 10 (713 aa).

Residues 1–16 (MLLATLLLLLLGGALA) form the signal peptide. The Extracellular portion of the chain corresponds to 17–440 (HPDRIIFPNH…WDCSYVLPRK (424 aa)). 2 disulfides stabilise this stretch: cysteine 28/cysteine 57 and cysteine 80/cysteine 98. The region spanning 28 to 136 (CEDPPAVLLE…QGFLLSYSQD (109 aa)) is the CUB 1 domain. Residue asparagine 56 is glycosylated (N-linked (GlcNAc...) asparagine). Residue asparagine 111 is glycosylated (N-linked (GlcNAc...) asparagine). The LDL-receptor class A 1 domain maps to 139-175 (MCLQEEFQCLNHRCVSAVQRCDGVDACGDGSDEAGCS). 4 disulfides stabilise this stretch: cysteine 140–cysteine 152, cysteine 147–cysteine 165, cysteine 159–cysteine 174, and cysteine 192–cysteine 220. The CUB 2 domain occupies 192–305 (CNVTLEDFYG…RGFNATYHVR (114 aa)). N-linked (GlcNAc...) asparagine glycosylation is found at asparagine 193 and asparagine 299. 3 LDL-receptor class A domains span residues 307-354 (YCLP…EDCP), 355-397 (GCPP…RRCR), and 398-434 (HCQP…WDCS). 9 disulfides stabilise this stretch: cysteine 308-cysteine 331, cysteine 315-cysteine 344, cysteine 338-cysteine 353, cysteine 356-cysteine 374, cysteine 363-cysteine 387, cysteine 381-cysteine 396, cysteine 399-cysteine 411, cysteine 406-cysteine 424, and cysteine 418-cysteine 433. A helical transmembrane segment spans residues 441–461 (VITAAVIGSLVCGLLLVIALG). Residues 462 to 713 (CTCKLYAIRT…AEAEDEPLLT (252 aa)) lie on the Cytoplasmic side of the membrane. The tract at residues 564-637 (GLLPRTNTPA…SPAPTTVPEA (74 aa)) is disordered. Polar residues predominate over residues 569–584 (TNTPARASEARSQVTP). Threonine 596 is modified (phosphothreonine). The segment covering 621-636 (PLPSASTSPAPTTVPE) has biased composition (low complexity).

The protein belongs to the LDLR family. Expressed in blood leukocyte, lung, placenta, small intestine, liver, kidney, spleen, thymus, colon, skeletal muscle and heart.

It localises to the membrane. The protein resides in the coated pit. Probable receptor, which is involved in the internalization of lipophilic molecules and/or signal transduction. May be involved in the uptake of lipoprotein APOE in liver. The polypeptide is Low-density lipoprotein receptor-related protein 10 (LRP10) (Homo sapiens (Human)).